A 418-amino-acid polypeptide reads, in one-letter code: Serine hydroxymethyltransferase (418 aa).

(6S)-5,6,7,8-tetrahydrofolate contacts are provided by residues leucine 120 and 124–126; that span reads GHL. At lysine 229 the chain carries N6-(pyridoxal phosphate)lysine. 353 to 355 contacts (6S)-5,6,7,8-tetrahydrofolate; the sequence is SPF.

This sequence belongs to the SHMT family. As to quaternary structure, homodimer. It depends on pyridoxal 5'-phosphate as a cofactor.

It is found in the cytoplasm. The enzyme catalyses (6R)-5,10-methylene-5,6,7,8-tetrahydrofolate + glycine + H2O = (6S)-5,6,7,8-tetrahydrofolate + L-serine. It functions in the pathway one-carbon metabolism; tetrahydrofolate interconversion. It participates in amino-acid biosynthesis; glycine biosynthesis; glycine from L-serine: step 1/1. Functionally, catalyzes the reversible interconversion of serine and glycine with tetrahydrofolate (THF) serving as the one-carbon carrier. This reaction serves as the major source of one-carbon groups required for the biosynthesis of purines, thymidylate, methionine, and other important biomolecules. Also exhibits THF-independent aldolase activity toward beta-hydroxyamino acids, producing glycine and aldehydes, via a retro-aldol mechanism. The polypeptide is Serine hydroxymethyltransferase (Psychrobacter sp. (strain PRwf-1)).